A 116-amino-acid chain; its full sequence is Nucleoid-associated protein P9301_00191 (116 aa).

The protein belongs to the YbaB/EbfC family. Homodimer.

The protein localises to the cytoplasm. It is found in the nucleoid. In terms of biological role, binds to DNA and alters its conformation. May be involved in regulation of gene expression, nucleoid organization and DNA protection. This Prochlorococcus marinus (strain MIT 9301) protein is Nucleoid-associated protein P9301_00191.